The primary structure comprises 68 residues: DNA-directed RNA polymerase subunit omega (68 aa).

This sequence belongs to the RNA polymerase subunit omega family. As to quaternary structure, the RNAP catalytic core consists of 2 alpha, 1 beta, 1 beta' and 1 omega subunit. When a sigma factor is associated with the core the holoenzyme is formed, which can initiate transcription.

It carries out the reaction RNA(n) + a ribonucleoside 5'-triphosphate = RNA(n+1) + diphosphate. In terms of biological role, promotes RNA polymerase assembly. Latches the N- and C-terminal regions of the beta' subunit thereby facilitating its interaction with the beta and alpha subunits. The polypeptide is DNA-directed RNA polymerase subunit omega (Ruminiclostridium cellulolyticum (strain ATCC 35319 / DSM 5812 / JCM 6584 / H10) (Clostridium cellulolyticum)).